A 360-amino-acid chain; its full sequence is G-protein coupled receptor 15 (360 aa).

The Extracellular portion of the chain corresponds to 1-33; it reads MDPEETSVYLDYYYATSPNPDIRETHSHVPYTS. The helical transmembrane segment at 34–54 threads the bilayer; it reads VFLPVFYIAVFLTGVLGNLVL. The Cytoplasmic portion of the chain corresponds to 55-69; it reads MGALHFKPGSRRLID. A helical membrane pass occupies residues 70–90; the sequence is IFIINLAASDFIFLVTLPLWV. Topologically, residues 91–120 are extracellular; that stretch reads DKEASLGLWRTGSFLCKGSSYMISVNMHCS. Residues 121–141 form a helical membrane-spanning segment; it reads VFLLTCMSVDRYLAIVCPVVS. Topologically, residues 142–149 are cytoplasmic; the sequence is RKFRRTDC. Residues 150 to 170 traverse the membrane as a helical segment; that stretch reads AYVVCASIWFISCLLGLPTLL. Over 171-192 the chain is Extracellular; sequence SRELTLIDDKPYCAEKKATPLK. Residues 193–213 form a helical membrane-spanning segment; it reads LIWSLVALIFTFFVPLLSIVT. Residues 214-239 are Cytoplasmic-facing; it reads CYCRIARKLCAHYQQSGKHNKKLKKS. A helical transmembrane segment spans residues 240 to 260; the sequence is IKIIFIVVAAFLVSWLPFNTS. At 261 to 284 the chain is on the extracellular side; it reads KLLAIVSGLQQERYFPSAILQLGM. A helical transmembrane segment spans residues 285–305; that stretch reads EVSGPLAFANSCVNPFIYYIF. Residues 306–360 lie on the Cytoplasmic side of the membrane; that stretch reads DSYIRRAIVHCLCPCLKNYDFGSSTETSDSHLTKALSTFIHAEDFTRRRKRSVSL. Phosphoserine is present on S359.

It belongs to the G-protein coupled receptor 1 family. As to quaternary structure, interacts with adapter YWHAE; this interaction promotes ER-to-Golgi transport of GPR15. Phosphorylation is necessary for YWHAE binding and efficient surface expression. In terms of processing, O-glycosylated. Sialylated O-glycans in the N-terminal tail inhibits binding of GPR15LG. Post-translationally, sulfation is required for efficient binding of GPR15LG.

It localises to the cell membrane. G protein-coupled receptor that plays an important role in immune homeostasis. Acts via its natural ligand GPR15LG, a chemokine-like polypeptide strongly expressed in gastrointestinal tissues. GPR15-GPR15LG signaling axis regulates intestinal homeostasis and inflammation through the migration of immune cells. Controls thereby the specific homing of T-cells, particularly FOXP3+ regulatory T-cells (Tregs), to the large intestine lamina propria. Also required for skin localization of thymus-derived dendritic epidermal T-cells. Plays an important role in mediating cytoprotective function as well as angiogenesis of thrombomodulin. Mechanistically, preferentially signals through the Gi/o pathway to inhibit adenylate cyclase activity and activate a phosphatidylinositol-calcium second messenger system that regulates the release of Ca(2+) ions from intracellular stores. In Chlorocebus aethiops (Green monkey), this protein is G-protein coupled receptor 15 (GPR15).